The sequence spans 593 residues: Glucose-6-phosphate 1-dehydrogenase, chloroplastic (593 aa).

NADP(+) contacts are provided by residues 116 to 123 (GASGDLAK) and arginine 150. A disulfide bridge connects residues cysteine 168 and cysteine 176. Lysine 253 contributes to the NADP(+) binding site. Residues lysine 253, 283–287 (HYLGK), glutamate 321, and aspartate 340 contribute to the D-glucose 6-phosphate site. Histidine 345 (proton acceptor) is an active-site residue. Lysine 438 lines the NADP(+) pocket. 2 residues coordinate D-glucose 6-phosphate: lysine 441 and arginine 446. The NADP(+) site is built by arginine 451 and arginine 480. Position 482 (glutamine 482) interacts with D-glucose 6-phosphate. NADP(+) is bound by residues 488-490 (YLK) and arginine 573.

This sequence belongs to the glucose-6-phosphate dehydrogenase family. Homodimer.

Its subcellular location is the plastid. The protein localises to the chloroplast. It catalyses the reaction D-glucose 6-phosphate + NADP(+) = 6-phospho-D-glucono-1,5-lactone + NADPH + H(+). The protein operates within carbohydrate degradation; pentose phosphate pathway; D-ribulose 5-phosphate from D-glucose 6-phosphate (oxidative stage): step 1/3. Its activity is regulated as follows. Regulated by metabolites. Post-translationally inactivated by cysteine-mediated redox modification via the ferredoxin-thioredoxin system in the light and this avoids futile cycles with photosynthetic CO2 fixation. Catalyzes the rate-limiting step of the oxidative pentose-phosphate pathway, which represents a route for the dissimilation of carbohydrates besides glycolysis. The main function of this enzyme is to provide reducing power (NADPH) and pentose phosphates for fatty acid and nucleic acid synthesis which are involved in membrane synthesis and cell division. This chain is Glucose-6-phosphate 1-dehydrogenase, chloroplastic, found in Nicotiana tabacum (Common tobacco).